The primary structure comprises 628 residues: Probable potassium transport system protein Kup (628 aa).

12 helical membrane-spanning segments follow: residues A12 to S32, L57 to V77, W106 to T126, I141 to F161, F174 to I194, L219 to A239, W253 to L273, L295 to F315, I343 to F363, L369 to V389, A402 to L422, and L425 to S445.

It belongs to the HAK/KUP transporter (TC 2.A.72) family.

It localises to the cell inner membrane. It carries out the reaction K(+)(in) + H(+)(in) = K(+)(out) + H(+)(out). Its function is as follows. Transport of potassium into the cell. Likely operates as a K(+):H(+) symporter. This Azorhizobium caulinodans (strain ATCC 43989 / DSM 5975 / JCM 20966 / LMG 6465 / NBRC 14845 / NCIMB 13405 / ORS 571) protein is Probable potassium transport system protein Kup.